We begin with the raw amino-acid sequence, 434 residues long: [Arg8]-vasotocin receptor (434 aa).

The Extracellular segment spans residues 1–27; sequence MGRIANQTTASNDTDPFGRNEEVAKME. N-linked (GlcNAc...) asparagine glycosylation is found at Asn6 and Asn12. A helical membrane pass occupies residues 28–48; sequence ITVLSVTFFVAVIGNLSVLLA. The Cytoplasmic portion of the chain corresponds to 49–67; the sequence is MHNTKKKSSRMHLFIKHLS. A helical membrane pass occupies residues 68–88; it reads LADMVVAFFQVLPQLCWEITF. Residues 89-98 lie on the Extracellular side of the membrane; the sequence is RFYGPDFLCR. Cys97 and Cys176 are joined by a disulfide. A helical transmembrane segment spans residues 99-119; that stretch reads IVKHLQVLGMFASTYMMVMMT. Residues 120-141 lie on the Cytoplasmic side of the membrane; it reads LDRYIAICHPLKTLQQPTQRAY. A helical transmembrane segment spans residues 142-162; it reads IMIGSTWLCSLLLSTPQYFIF. Topologically, residues 163-191 are extracellular; sequence SLSEIQNGSYVYDCWGHFIEPWGIRAYIT. A helical membrane pass occupies residues 192–212; sequence WITVGIFLIPVIILMICYGFI. The Cytoplasmic segment spans residues 213–257; it reads CHSIWKNIKCKTMRGTRNTKDGMIGKVSVSSVTIISRAKLRTVKM. The helical transmembrane segment at 258-278 threads the bilayer; the sequence is TLVIVLAYIVCWAPFFIVQMW. Residues 279-295 lie on the Extracellular side of the membrane; sequence SVWDENFSWDDSENAAV. Residues 296–316 traverse the membrane as a helical segment; the sequence is TLSALLASLNSCCNPWIYMLF. The Cytoplasmic portion of the chain corresponds to 317–434; sequence SGHLLYDFLR…KSSQCMSKES (118 aa).

The protein belongs to the G-protein coupled receptor 1 family. Vasopressin/oxytocin receptor subfamily. As to expression, expressed in pituitary, liver, gills, swim bladder and lateral line.

The protein resides in the cell membrane. Binds to vasotocin. Produces an induction of membrane chloride currents indicating that it is coupled to the inositol phosphate/calcium pathway. The sequence is that of [Arg8]-vasotocin receptor from Catostomus commersonii (White sucker).